The primary structure comprises 90 residues: Large ribosomal subunit protein uL23c (90 aa).

Belongs to the universal ribosomal protein uL23 family. As to quaternary structure, part of the 50S ribosomal subunit.

The protein resides in the plastid. Its subcellular location is the chloroplast. Its function is as follows. Binds to 23S rRNA. The polypeptide is Large ribosomal subunit protein uL23c (rpl23) (Psilotum nudum (Whisk fern)).